A 178-amino-acid chain; its full sequence is Large ribosomal subunit protein bL25 (178 aa).

The protein belongs to the bacterial ribosomal protein bL25 family. CTC subfamily. In terms of assembly, part of the 50S ribosomal subunit; part of the 5S rRNA/L5/L18/L25 subcomplex. Contacts the 5S rRNA. Binds to the 5S rRNA independently of L5 and L18.

Functionally, this is one of the proteins that binds to the 5S RNA in the ribosome where it forms part of the central protuberance. The protein is Large ribosomal subunit protein bL25 of Helicobacter pylori (strain HPAG1).